A 149-amino-acid polypeptide reads, in one-letter code: Large ribosomal subunit protein uL15 (149 aa).

Over residues 1 to 28 (MVIKIHDLRPAPGSKRDKIRVGRGEGSK) the composition is skewed to basic and acidic residues. Residues 1–54 (MVIKIHDLRPAPGSKRDKIRVGRGEGSKGKTAGRGTKGTKARKNVSPRFEGGQM) form a disordered region.

The protein belongs to the universal ribosomal protein uL15 family. Part of the 50S ribosomal subunit.

Functionally, binds to the 23S rRNA. The protein is Large ribosomal subunit protein uL15 of Saccharopolyspora erythraea (strain ATCC 11635 / DSM 40517 / JCM 4748 / NBRC 13426 / NCIMB 8594 / NRRL 2338).